We begin with the raw amino-acid sequence, 350 residues long: Uroporphyrinogen decarboxylase (350 aa).

Substrate contacts are provided by residues 23–27 (RQAGR), D72, Y149, S204, and H318.

The protein belongs to the uroporphyrinogen decarboxylase family. In terms of assembly, homodimer.

It is found in the cytoplasm. It catalyses the reaction uroporphyrinogen III + 4 H(+) = coproporphyrinogen III + 4 CO2. Its pathway is porphyrin-containing compound metabolism; protoporphyrin-IX biosynthesis; coproporphyrinogen-III from 5-aminolevulinate: step 4/4. Its function is as follows. Catalyzes the decarboxylation of four acetate groups of uroporphyrinogen-III to yield coproporphyrinogen-III. The chain is Uroporphyrinogen decarboxylase from Carboxydothermus hydrogenoformans (strain ATCC BAA-161 / DSM 6008 / Z-2901).